Reading from the N-terminus, the 337-residue chain is Nucleoid-associated protein Avin_11450 (337 aa).

It belongs to the YejK family.

The protein resides in the cytoplasm. It localises to the nucleoid. This Azotobacter vinelandii (strain DJ / ATCC BAA-1303) protein is Nucleoid-associated protein Avin_11450.